Here is a 383-residue protein sequence, read N- to C-terminus: Chaperone protein DnaJ (383 aa).

The J domain maps to 5 to 70 (DYYELLGVSR…QKRAAYDRFG (66 aa)). A CR-type zinc finger spans residues 140–219 (GTKTEIRVPT…CSGAGTVPRE (80 aa)). Residues cysteine 153, cysteine 156, cysteine 171, cysteine 174, cysteine 193, cysteine 196, cysteine 207, and cysteine 210 each coordinate Zn(2+). 4 CXXCXGXG motif repeats span residues 153-160 (CDACSGTG), 171-178 (CPTCGGAG), 193-200 (CPTCGGAG), and 207-214 (CRVCSGAG).

The protein belongs to the DnaJ family. Homodimer. Zn(2+) is required as a cofactor.

It localises to the cytoplasm. Its function is as follows. Participates actively in the response to hyperosmotic and heat shock by preventing the aggregation of stress-denatured proteins and by disaggregating proteins, also in an autonomous, DnaK-independent fashion. Unfolded proteins bind initially to DnaJ; upon interaction with the DnaJ-bound protein, DnaK hydrolyzes its bound ATP, resulting in the formation of a stable complex. GrpE releases ADP from DnaK; ATP binding to DnaK triggers the release of the substrate protein, thus completing the reaction cycle. Several rounds of ATP-dependent interactions between DnaJ, DnaK and GrpE are required for fully efficient folding. Also involved, together with DnaK and GrpE, in the DNA replication of plasmids through activation of initiation proteins. The chain is Chaperone protein DnaJ from Acidiphilium cryptum (strain JF-5).